The chain runs to 245 residues: DNA polymerase sliding clamp (245 aa).

Belongs to the PCNA family. Homotrimer. The subunits circularize to form a toroid; DNA passes through its center. Replication factor C (RFC) is required to load the toroid on the DNA.

Sliding clamp subunit that acts as a moving platform for DNA processing. Responsible for tethering the catalytic subunit of DNA polymerase and other proteins to DNA during high-speed replication. This chain is DNA polymerase sliding clamp, found in Methanosarcina mazei (strain ATCC BAA-159 / DSM 3647 / Goe1 / Go1 / JCM 11833 / OCM 88) (Methanosarcina frisia).